An 82-amino-acid polypeptide reads, in one-letter code: RNA-binding protein Hfq (82 aa).

The 62-residue stretch at 11-72 (DTFLNAVRKS…ISTIAPSAPV (62 aa)) folds into the Sm domain.

Belongs to the Hfq family. In terms of assembly, homohexamer.

RNA chaperone that binds small regulatory RNA (sRNAs) and mRNAs to facilitate mRNA translational regulation in response to envelope stress, environmental stress and changes in metabolite concentrations. Also binds with high specificity to tRNAs. In Hyphomonas neptunium (strain ATCC 15444), this protein is RNA-binding protein Hfq.